Here is a 75-residue protein sequence, read N- to C-terminus: Cruzioseptin-7 (75 aa).

The first 22 residues, M1–C22, serve as a signal peptide directing secretion. Positions E23–E43 are excised as a propeptide. The segment at E25–K44 is disordered. Residues E30–S41 show a composition bias toward acidic residues.

Expressed by the skin glands.

The protein localises to the secreted. In terms of biological role, has antimicrobial activity. In Cruziohyla calcarifer (Splendid leaf frog), this protein is Cruzioseptin-7.